The primary structure comprises 103 residues: Nucleoid-associated protein NIS_0256 (103 aa).

The protein belongs to the YbaB/EbfC family. In terms of assembly, homodimer.

Its subcellular location is the cytoplasm. It is found in the nucleoid. Functionally, binds to DNA and alters its conformation. May be involved in regulation of gene expression, nucleoid organization and DNA protection. The polypeptide is Nucleoid-associated protein NIS_0256 (Nitratiruptor sp. (strain SB155-2)).